The following is a 397-amino-acid chain: DNA-directed RNA polymerase subunit Rpo1C (397 aa).

It belongs to the RNA polymerase beta' chain family. In terms of assembly, part of the RNA polymerase complex.

The protein localises to the cytoplasm. It catalyses the reaction RNA(n) + a ribonucleoside 5'-triphosphate = RNA(n+1) + diphosphate. DNA-dependent RNA polymerase (RNAP) catalyzes the transcription of DNA into RNA using the four ribonucleoside triphosphates as substrates. Forms part of the jaw domain. In Methanosarcina acetivorans (strain ATCC 35395 / DSM 2834 / JCM 12185 / C2A), this protein is DNA-directed RNA polymerase subunit Rpo1C.